Here is a 212-residue protein sequence, read N- to C-terminus: ER lumen protein-retaining receptor 1 (212 aa).

The Lumenal portion of the chain corresponds to 1 to 4 (MNIF). Residues 5-24 (RFLGDISHLSAILILLLKIW) form a helical membrane-spanning segment. At 25 to 32 (KSRSCAGI) the chain is on the cytoplasmic side. A helical membrane pass occupies residues 33–52 (SGKSQLLFAIVFTTRYLDLF). Residues 47–48 (RY) form an interaction with the K-D-E-L motif on target proteins region. Topologically, residues 53–58 (TNFISL) are lumenal. The chain crosses the membrane as a helical span at residues 59–79 (YNTSMKMVYVASSYATIWMIY). Residues 80-92 (SKFKATYDGNHDT) are Cytoplasmic-facing. The chain crosses the membrane as a helical span at residues 93–110 (FRVEFLIVPTAILAFLVN). Topologically, residues 111 to 116 (HDFTPL) are lumenal. Residues 117–135 (EILWTFSIYLESVAILPQL) form a helical membrane-spanning segment. Residues 136 to 149 (FMVSKTGEAETITS) lie on the Cytoplasmic side of the membrane. The helical transmembrane segment at 150–168 (HYLFALGIYRALYLFNWIW) threads the bilayer. Residues 159-169 (RALYLFNWIWR) are interaction with the K-D-E-L motif on target proteins. Residues 169–178 (RYQFEGFFDL) lie on the Lumenal side of the membrane. A helical membrane pass occupies residues 179–199 (IAIVAGLVQTVLYCDFFYLYI). Residues 200 to 212 (TKVLKGKKLSLPA) are Cytoplasmic-facing. Residues 204 to 207 (KGKK) are important for recycling of cargo proteins with the sequence motif K-D-E-L from the Golgi to the endoplasmic reticulum.

It belongs to the ERD2 family.

It is found in the golgi apparatus membrane. It localises to the cytoplasmic vesicle. The protein localises to the COPI-coated vesicle membrane. The protein resides in the endoplasmic reticulum membrane. Its subcellular location is the endoplasmic reticulum-Golgi intermediate compartment membrane. Its function is as follows. Receptor for the C-terminal sequence motif K-D-E-L that is present on endoplasmic reticulum resident proteins and that mediates their recycling from the Golgi back to the endoplasmic reticulum. The polypeptide is ER lumen protein-retaining receptor 1 (kdelr1) (Xenopus tropicalis (Western clawed frog)).